We begin with the raw amino-acid sequence, 479 residues long: GTPase Obg (479 aa).

Residues 2–159 (TTFVDRVELH…QDIVLELKTV (158 aa)) form the Obg domain. The disordered stretch occupies residues 61–87 (HHKPHRSATNGKPGEGGNRSGKDGQDL). The region spanning 160 to 331 (ADVALVGYPS…LSFALAELVG (172 aa)) is the OBG-type G domain. GTP-binding positions include 166–173 (GYPSAGKS), 191–195 (FTTLV), 212–215 (DVPG), 283–286 (NKID), and 312–314 (SAV). S173 and T193 together coordinate Mg(2+). One can recognise an OCT domain in the interval 349 to 431 (PKAVDDAGFT…DNAVVFDWEP (83 aa)). The segment covering 440-453 (LGRRGEDHRLDEPR) has biased composition (basic and acidic residues). The segment at 440-479 (LGRRGEDHRLDEPRPAAQRRRDKQAERDDAEKEYDDFEPF) is disordered. Positions 470–479 (EKEYDDFEPF) are enriched in acidic residues.

Belongs to the TRAFAC class OBG-HflX-like GTPase superfamily. OBG GTPase family. Monomer. The cofactor is Mg(2+).

It localises to the cytoplasm. Functionally, an essential GTPase which binds GTP, GDP and possibly (p)ppGpp with moderate affinity, with high nucleotide exchange rates and a fairly low GTP hydrolysis rate. Plays a role in control of the cell cycle, stress response, ribosome biogenesis and in those bacteria that undergo differentiation, in morphogenesis control. The polypeptide is GTPase Obg (Streptomyces avermitilis (strain ATCC 31267 / DSM 46492 / JCM 5070 / NBRC 14893 / NCIMB 12804 / NRRL 8165 / MA-4680)).